Consider the following 669-residue polypeptide: Filensin (669 aa).

The head stretch occupies residues Met1–Gly33. The residue at position 5 (Ser5) is a Phosphoserine. Residues Gly33 to Leu318 form the IF rod domain. The segment at Leu34–Phe68 is coil 1A. The residue at position 35 (Ala35) is an N-acetylalanine. Residues Gln69 to Pro77 form a linker 1 region. Residues Glu78–Gln177 form a coil 1B region. The segment at Thr178–Ser194 is linker 12. A coil 2 region spans residues Leu195 to Leu318. The interval Ser319–Ala669 is tail. Ser339 bears the Phosphoserine mark. Disordered regions lie at residues Val380–Ile435, Arg449–Gly468, and His505–Ser618. Residues Ser408 to Gly417 show a composition bias toward gly residues. A lipid anchor (N-myristoyl glycine) is attached at Gly432. Ser513 is subject to Phosphoserine. The segment covering Asn545–Arg570 has biased composition (basic and acidic residues). Residues Pro583–Ser593 are compositionally biased toward polar residues. Thr585 bears the Phosphothreonine mark.

The protein belongs to the intermediate filament family. In terms of assembly, part of a complex required for lens intermediate filament formation composed of BFSP1, BFSP2 and CRYAA. Identified in a complex that contains VIM, EZR, AHNAK, BFSP1, BFSP2, ANK2, PLEC, PRX and spectrin. Found in a complex composed of PPL (via C-terminal linker domain), BFSP1 and BFSP2 in the retinal lens. Within the complex interacts with BFSP2. Interacts (via C-terminus) with MIP (via C-terminus) in aged lens fiber cells. In terms of processing, proteolytically cleaved during lens cell fiber differentiation with increased fragmentation as fiber cell age increases. Post-translationally, myristoylated at Gly-432 following proteolytic cleavage at Asp-431. Acetylated at Ala-35 following proteolytic cleavage at Leu-34. In terms of tissue distribution, detected in eye lens fiber cells (at protein level). Expressed in retinal lens epithelial cells (at protein level).

It localises to the cell membrane. It is found in the cytoplasm. Its subcellular location is the cytoskeleton. The protein resides in the cell cortex. In terms of biological role, required for the correct formation of lens intermediate filaments as part of a complex composed of BFSP1, BFSP2 and CRYAA. Involved in altering the calcium regulation of MIP water permeability. This Mus musculus (Mouse) protein is Filensin (Bfsp1).